Here is a 223-residue protein sequence, read N- to C-terminus: Ribonuclease HII (223 aa).

Residues 32–223 (LYIAGVDEVG…LKKRYRDYMS (192 aa)) form the RNase H type-2 domain. Residues Asp38, Glu39, and Asp130 each coordinate a divalent metal cation.

The protein belongs to the RNase HII family. Mn(2+) serves as cofactor. The cofactor is Mg(2+).

Its subcellular location is the cytoplasm. It carries out the reaction Endonucleolytic cleavage to 5'-phosphomonoester.. Endonuclease that specifically degrades the RNA of RNA-DNA hybrids. This chain is Ribonuclease HII, found in Bartonella henselae (strain ATCC 49882 / DSM 28221 / CCUG 30454 / Houston 1) (Rochalimaea henselae).